The sequence spans 220 residues: Metalloproteinase inhibitor 2 (220 aa).

Residues 1-26 (MGAAARTLRLALGLLLLATLLRPADA) form the signal peptide. A Zn(2+)-binding site is contributed by cysteine 27. 2 involved in metalloproteinase-binding regions span residues 27–30 (CSCS) and 95–96 (SA). 6 cysteine pairs are disulfide-bonded: cysteine 27–cysteine 98, cysteine 29–cysteine 127, cysteine 39–cysteine 152, cysteine 154–cysteine 201, cysteine 159–cysteine 164, and cysteine 172–cysteine 193. The NTR domain occupies 27 to 152 (CSCSPVHPQQ…SLNHRYQMGC (126 aa)).

Belongs to the protease inhibitor I35 (TIMP) family. In terms of assembly, interacts (via the C-terminal) with MMP2 (via the C-terminal PEX domain); the interaction inhibits the MMP2 activity. In terms of processing, the activity of TIMP2 is dependent on the presence of disulfide bonds.

The protein resides in the secreted. In terms of biological role, complexes with metalloproteinases (such as collagenases) and irreversibly inactivates them by binding to their catalytic zinc cofactor. Known to act on MMP-1, MMP-2, MMP-3, MMP-7, MMP-8, MMP-9, MMP-10, MMP-13, MMP-14, MMP-15, MMP-16 and MMP-19. In Homo sapiens (Human), this protein is Metalloproteinase inhibitor 2 (TIMP2).